A 410-amino-acid polypeptide reads, in one-letter code: Divergent protein kinase domain 1C (410 aa).

The Cytoplasmic portion of the chain corresponds to 1–19 (MARAAGERGRAARCGRWRR). Residues 18–19 (RR) carry the May mediate ER retention motif. The helical transmembrane segment at 20 to 40 (GALLAFAAWTAGWVLAAALLL) threads the bilayer. Residues 41-410 (RAHPSVLSER…TLKELQEAEK (370 aa)) lie on the Lumenal side of the membrane.

Belongs to the DIPK family. In terms of processing, among the many cysteines in the lumenal domain, most are probably involved in disulfide bonds. Mainly expressed in the brain and eye, some expression in kidney and skeletal muscle.

The protein resides in the endoplasmic reticulum membrane. This is Divergent protein kinase domain 1C (Dipk1c) from Mus musculus (Mouse).